The primary structure comprises 480 residues: Glutamate--tRNA ligase (480 aa).

The 'HIGH' region signature appears at 21–31; the sequence is PSPTGYLHVGG. Zn(2+) is bound by residues Cys110, Cys112, Cys137, and His139. Residues 248 to 252 carry the 'KMSKS' region motif; sequence KLSKR. ATP is bound at residue Lys251.

This sequence belongs to the class-I aminoacyl-tRNA synthetase family. Glutamate--tRNA ligase type 1 subfamily. Monomer. The cofactor is Zn(2+).

The protein localises to the cytoplasm. It carries out the reaction tRNA(Glu) + L-glutamate + ATP = L-glutamyl-tRNA(Glu) + AMP + diphosphate. Catalyzes the attachment of glutamate to tRNA(Glu) in a two-step reaction: glutamate is first activated by ATP to form Glu-AMP and then transferred to the acceptor end of tRNA(Glu). In Haemophilus influenzae (strain 86-028NP), this protein is Glutamate--tRNA ligase.